We begin with the raw amino-acid sequence, 227 residues long: Pro-thyrotropin-releasing hormone-A (227 aa).

A signal peptide spans 1–15; it reads MVSVWWLLLLGTTVS. Gln-75 is modified (pyrrolidone carboxylic acid). Pro-77 carries the post-translational modification Proline amide. A Pyrrolidone carboxylic acid modification is found at Gln-89. Proline amide is present on Pro-91. Gln-107 is subject to Pyrrolidone carboxylic acid. Disordered regions lie at residues 107-128 and 151-204; these read QHPG…KREE and RRQH…PCEG. Pro-109 is subject to Proline amide. The span at 112–128 shows a compositional bias: basic and acidic residues; the sequence is RFVDDVEKRQHPGKREE. Gln-121 is subject to Pyrrolidone carboxylic acid. The residue at position 123 (Pro-123) is a Proline amide. Position 153 is a pyrrolidone carboxylic acid (Gln-153). The residue at position 155 (Pro-155) is a Proline amide. Pyrrolidone carboxylic acid is present on Gln-168. Pro-170 is subject to Proline amide. Positions 184–201 are enriched in basic and acidic residues; sequence ENSKEVGKRQHPGKRYDP. The residue at position 193 (Gln-193) is a Pyrrolidone carboxylic acid. Pro-195 bears the Proline amide mark.

It belongs to the TRH family.

It localises to the secreted. The chain is Pro-thyrotropin-releasing hormone-A (trh-a) from Xenopus laevis (African clawed frog).